The sequence spans 214 residues: Redox-sensing transcriptional repressor Rex (214 aa).

Positions 17 to 56 (LYYRIFKRFHADQVEKASSKQIADAMGIDSATVRRDFSYF) form a DNA-binding region, H-T-H motif. 91–96 (GCGNIG) lines the NAD(+) pocket.

The protein belongs to the transcriptional regulatory Rex family. In terms of assembly, homodimer.

The protein resides in the cytoplasm. Modulates transcription in response to changes in cellular NADH/NAD(+) redox state. The polypeptide is Redox-sensing transcriptional repressor Rex (Streptococcus pyogenes serotype M1).